Consider the following 249-residue polypeptide: MAEISAKQVKELRETTGAGMMDCKKALQENQGDMTKAIEWLRQKGITSAEKKSGRQTAEGLVESYIHTGGRIGVLVEVNCETDFVARREEFKELVRNVAMQIAACPNVEYIQGSDIPEAVVAKEKEIEMGRDDLGNKPDNIKEKIVQGRIEKRIKELCLLDQPYIRDQNVTVEELIKQTIAQLGENIQVRRFTRFVLGEGIEKQEVDFAREVAEQAGQLAPEAESTTETADATSETTTEKSSAKKKKKK.

Residues 82-85 (TDFV) are involved in Mg(2+) ion dislocation from EF-Tu. Residues 215 to 249 (QAGQLAPEAESTTETADATSETTTEKSSAKKKKKK) form a disordered region. Positions 222–236 (EAESTTETADATSET) are enriched in low complexity.

The protein belongs to the EF-Ts family.

Its subcellular location is the cytoplasm. In terms of biological role, associates with the EF-Tu.GDP complex and induces the exchange of GDP to GTP. It remains bound to the aminoacyl-tRNA.EF-Tu.GTP complex up to the GTP hydrolysis stage on the ribosome. This is Elongation factor Ts from Rippkaea orientalis (strain PCC 8801 / RF-1) (Cyanothece sp. (strain PCC 8801)).